Reading from the N-terminus, the 689-residue chain is tRNA 5-methylaminomethyl-2-thiouridine biosynthesis bifunctional protein MnmC (689 aa).

A tRNA (mnm(5)s(2)U34)-methyltransferase region spans residues methionine 1–proline 245. The segment at isoleucine 270–arginine 689 is FAD-dependent cmnm(5)s(2)U34 oxidoreductase.

In the N-terminal section; belongs to the methyltransferase superfamily. tRNA (mnm(5)s(2)U34)-methyltransferase family. This sequence in the C-terminal section; belongs to the DAO family. It depends on FAD as a cofactor.

It localises to the cytoplasm. It catalyses the reaction 5-aminomethyl-2-thiouridine(34) in tRNA + S-adenosyl-L-methionine = 5-methylaminomethyl-2-thiouridine(34) in tRNA + S-adenosyl-L-homocysteine + H(+). Catalyzes the last two steps in the biosynthesis of 5-methylaminomethyl-2-thiouridine (mnm(5)s(2)U) at the wobble position (U34) in tRNA. Catalyzes the FAD-dependent demodification of cmnm(5)s(2)U34 to nm(5)s(2)U34, followed by the transfer of a methyl group from S-adenosyl-L-methionine to nm(5)s(2)U34, to form mnm(5)s(2)U34. The polypeptide is tRNA 5-methylaminomethyl-2-thiouridine biosynthesis bifunctional protein MnmC (Yersinia pseudotuberculosis serotype I (strain IP32953)).